The sequence spans 533 residues: Probable bifunctional tRNA threonylcarbamoyladenosine biosynthesis protein (533 aa).

The interval 1–329 is kae1; sequence MTRVLGIEGT…FRPDEVPVSW (329 aa). Positions 113 and 117 each coordinate Fe cation. L-threonylcarbamoyladenylate-binding positions include 134–138, Asp166, Gly179, Glu183, and Asn262; that span reads NASGA. Asp290 provides a ligand contact to Fe cation. The 196-residue stretch at 338–533 folds into the Protein kinase domain; sequence PVPTDERRQG…REIETRGRYQ (196 aa). Residues 345 to 352 and Lys363 each bind ATP; that span reads RQGAEAVV. Asp452 functions as the Proton acceptor; for kinase activity in the catalytic mechanism.

This sequence in the N-terminal section; belongs to the KAE1 / TsaD family. The protein in the C-terminal section; belongs to the protein kinase superfamily. Tyr protein kinase family. BUD32 subfamily. Component of the KEOPS complex that consists of Kae1, Bud32, Cgi121 and Pcc1; the whole complex dimerizes. Fe(2+) is required as a cofactor.

Its subcellular location is the cytoplasm. The catalysed reaction is L-seryl-[protein] + ATP = O-phospho-L-seryl-[protein] + ADP + H(+). It carries out the reaction L-threonyl-[protein] + ATP = O-phospho-L-threonyl-[protein] + ADP + H(+). It catalyses the reaction L-threonylcarbamoyladenylate + adenosine(37) in tRNA = N(6)-L-threonylcarbamoyladenosine(37) in tRNA + AMP + H(+). Its function is as follows. Required for the formation of a threonylcarbamoyl group on adenosine at position 37 (t(6)A37) in tRNAs that read codons beginning with adenine. Is a component of the KEOPS complex that is probably involved in the transfer of the threonylcarbamoyl moiety of threonylcarbamoyl-AMP (TC-AMP) to the N6 group of A37. The Kae1 domain likely plays a direct catalytic role in this reaction. The Bud32 domain probably displays kinase activity that regulates Kae1 function. The chain is Probable bifunctional tRNA threonylcarbamoyladenosine biosynthesis protein from Natronomonas pharaonis (strain ATCC 35678 / DSM 2160 / CIP 103997 / JCM 8858 / NBRC 14720 / NCIMB 2260 / Gabara) (Halobacterium pharaonis).